Reading from the N-terminus, the 379-residue chain is S-adenosylmethionine synthase (379 aa).

Position 15 (His15) interacts with ATP. Mg(2+) is bound at residue Asp17. K(+) is bound at residue Glu43. L-methionine is bound by residues Glu56 and Gln99. The flexible loop stretch occupies residues 99–109; the sequence is QSPDITQGVDR. Residues 164-166, 230-231, Asp239, 245-246, Ala262, and Lys266 contribute to the ATP site; these read DAK, RF, and RK. Asp239 contributes to the L-methionine binding site. L-methionine is bound at residue Lys270.

It belongs to the AdoMet synthase family. Homotetramer; dimer of dimers. Mg(2+) serves as cofactor. It depends on K(+) as a cofactor.

It is found in the cytoplasm. The enzyme catalyses L-methionine + ATP + H2O = S-adenosyl-L-methionine + phosphate + diphosphate. Its pathway is amino-acid biosynthesis; S-adenosyl-L-methionine biosynthesis; S-adenosyl-L-methionine from L-methionine: step 1/1. In terms of biological role, catalyzes the formation of S-adenosylmethionine (AdoMet) from methionine and ATP. The overall synthetic reaction is composed of two sequential steps, AdoMet formation and the subsequent tripolyphosphate hydrolysis which occurs prior to release of AdoMet from the enzyme. This chain is S-adenosylmethionine synthase, found in Buchnera aphidicola subsp. Schizaphis graminum (strain Sg).